The primary structure comprises 138 residues: Translation initiation factor 2 subunit beta (138 aa).

It belongs to the eIF-2-beta/eIF-5 family. In terms of assembly, heterotrimer composed of an alpha, a beta and a gamma chain.

EIF-2 functions in the early steps of protein synthesis by forming a ternary complex with GTP and initiator tRNA. The sequence is that of Translation initiation factor 2 subunit beta from Methanococcus maripaludis (strain DSM 14266 / JCM 13030 / NBRC 101832 / S2 / LL).